We begin with the raw amino-acid sequence, 514 residues long: 2,3-bisphosphoglycerate-independent phosphoglycerate mutase (514 aa).

2 residues coordinate Mn(2+): aspartate 12 and serine 62. The Phosphoserine intermediate role is filled by serine 62. Substrate is bound by residues histidine 123, 153–154 (RD), arginine 185, arginine 191, 260–263 (RPDR), and lysine 335. Mn(2+)-binding residues include aspartate 402, histidine 406, aspartate 443, histidine 444, and histidine 462.

It belongs to the BPG-independent phosphoglycerate mutase family. Monomer. Requires Mn(2+) as cofactor.

It carries out the reaction (2R)-2-phosphoglycerate = (2R)-3-phosphoglycerate. The protein operates within carbohydrate degradation; glycolysis; pyruvate from D-glyceraldehyde 3-phosphate: step 3/5. Functionally, catalyzes the interconversion of 2-phosphoglycerate and 3-phosphoglycerate. The chain is 2,3-bisphosphoglycerate-independent phosphoglycerate mutase from Lachnoclostridium phytofermentans (strain ATCC 700394 / DSM 18823 / ISDg) (Clostridium phytofermentans).